Here is a 438-residue protein sequence, read N- to C-terminus: Elongation factor 1-alpha (438 aa).

Residues 6 to 229 (KPHLNIVIIG…ALDTLEVPPK (224 aa)) enclose the tr-type G domain. A G1 region spans residues 15-22 (GHVDHGKS). 15–22 (GHVDHGKS) serves as a coordination point for GTP. Residue Ser22 participates in Mg(2+) binding. The tract at residues 71-75 (GVTIS) is G2. Positions 92–95 (DAPG) are G3. Residues 92–96 (DAPGH) and 154–157 (NKMD) each bind GTP. A G4 region spans residues 154-157 (NKMD). A G5 region spans residues 195 to 197 (SAW).

The protein belongs to the TRAFAC class translation factor GTPase superfamily. Classic translation factor GTPase family. EF-Tu/EF-1A subfamily.

The protein resides in the cytoplasm. The enzyme catalyses GTP + H2O = GDP + phosphate + H(+). In terms of biological role, GTP hydrolase that promotes the GTP-dependent binding of aminoacyl-tRNA to the A-site of ribosomes during protein biosynthesis. The sequence is that of Elongation factor 1-alpha from Desulfurococcus mucosus (Desulfurococcus mobilis).